Reading from the N-terminus, the 351-residue chain is Photosystem II D2 protein (351 aa).

A helical transmembrane segment spans residues 39–59; sequence TAYLSIGGWLTGTTFVTSWYT. Residue histidine 116 coordinates chlorophyll a. A helical transmembrane segment spans residues 123 to 139; sequence GFMLRQFEIARLVGIRP. Pheophytin a is bound by residues glutamine 128 and asparagine 141. The chain crosses the membrane as a helical span at residues 151–164; sequence VFVSVFLMYPLGQS. Chlorophyll a is bound at residue histidine 196. Residues 206-226 traverse the membrane as a helical segment; that stretch reads GALLCAIHGATVENTLFEDGE. Positions 213 and 260 each coordinate a plastoquinone. A Fe cation-binding site is contributed by histidine 213. Histidine 267 provides a ligand contact to Fe cation. Residues 277–293 traverse the membrane as a helical segment; that stretch reads GLWTSAIGIIGLALNLR.

It belongs to the reaction center PufL/M/PsbA/D family. In terms of assembly, PSII is composed of 1 copy each of membrane proteins PsbA, PsbB, PsbC, PsbD, PsbE, PsbF, PsbH, PsbI, PsbJ, PsbK, PsbL, PsbM, PsbT, PsbX, PsbY, PsbZ, Psb30/Ycf12, peripheral proteins PsbO, CyanoQ (PsbQ), PsbU, PsbV and a large number of cofactors. It forms dimeric complexes. It depends on The D1/D2 heterodimer binds P680, chlorophylls that are the primary electron donor of PSII, and subsequent electron acceptors. It shares a non-heme iron and each subunit binds pheophytin, quinone, additional chlorophylls, carotenoids and lipids. There is also a Cl(-1) ion associated with D1 and D2, which is required for oxygen evolution. The PSII complex binds additional chlorophylls, carotenoids and specific lipids. as a cofactor.

Its subcellular location is the cellular thylakoid membrane. The enzyme catalyses 2 a plastoquinone + 4 hnu + 2 H2O = 2 a plastoquinol + O2. Photosystem II (PSII) is a light-driven water:plastoquinone oxidoreductase that uses light energy to abstract electrons from H(2)O, generating O(2) and a proton gradient subsequently used for ATP formation. It consists of a core antenna complex that captures photons, and an electron transfer chain that converts photonic excitation into a charge separation. The D1/D2 (PsbA/PsbD) reaction center heterodimer binds P680, the primary electron donor of PSII as well as several subsequent electron acceptors. D2 is needed for assembly of a stable PSII complex. The chain is Photosystem II D2 protein from Synechococcus sp. (strain CC9311).